Reading from the N-terminus, the 298-residue chain is Probable pyridoxal 5'-phosphate synthase subunit SNZ2 (298 aa).

Asp-21 provides a ligand contact to D-ribose 5-phosphate. The active-site Schiff-base intermediate with D-ribose 5-phosphate is Lys-78. D-ribose 5-phosphate contacts are provided by residues Gly-150, Gly-213, and 234–235; that span reads GS.

Belongs to the PdxS/SNZ family. As to quaternary structure, homohexamer. Interacts with THI11.

It catalyses the reaction aldehydo-D-ribose 5-phosphate + D-glyceraldehyde 3-phosphate + L-glutamine = pyridoxal 5'-phosphate + L-glutamate + phosphate + 3 H2O + H(+). It participates in cofactor biosynthesis; pyridoxal 5'-phosphate biosynthesis. Catalyzes the formation of pyridoxal 5'-phosphate from ribose 5-phosphate (RBP), glyceraldehyde 3-phosphate (G3P) and ammonia. The ammonia is provided by a SNO isoform. Can also use ribulose 5-phosphate and dihydroxyacetone phosphate as substrates, resulting from enzyme-catalyzed isomerization of RBP and G3P, respectively. The polypeptide is Probable pyridoxal 5'-phosphate synthase subunit SNZ2 (SNZ2) (Saccharomyces cerevisiae (strain ATCC 204508 / S288c) (Baker's yeast)).